Reading from the N-terminus, the 185-residue chain is Ribosome-recycling factor (185 aa).

Belongs to the RRF family.

It localises to the cytoplasm. Its function is as follows. Responsible for the release of ribosomes from messenger RNA at the termination of protein biosynthesis. May increase the efficiency of translation by recycling ribosomes from one round of translation to another. In Geotalea daltonii (strain DSM 22248 / JCM 15807 / FRC-32) (Geobacter daltonii), this protein is Ribosome-recycling factor.